The chain runs to 211 residues: Imidazole glycerol phosphate synthase subunit HisH (211 aa).

The region spanning 4–211 (TVALLDYGSG…QLLRNWINHI (208 aa)) is the Glutamine amidotransferase type-1 domain. Cys82 functions as the Nucleophile in the catalytic mechanism. Catalysis depends on residues His192 and Glu194.

Heterodimer of HisH and HisF.

It localises to the cytoplasm. The enzyme catalyses 5-[(5-phospho-1-deoxy-D-ribulos-1-ylimino)methylamino]-1-(5-phospho-beta-D-ribosyl)imidazole-4-carboxamide + L-glutamine = D-erythro-1-(imidazol-4-yl)glycerol 3-phosphate + 5-amino-1-(5-phospho-beta-D-ribosyl)imidazole-4-carboxamide + L-glutamate + H(+). The catalysed reaction is L-glutamine + H2O = L-glutamate + NH4(+). It functions in the pathway amino-acid biosynthesis; L-histidine biosynthesis; L-histidine from 5-phospho-alpha-D-ribose 1-diphosphate: step 5/9. Functionally, IGPS catalyzes the conversion of PRFAR and glutamine to IGP, AICAR and glutamate. The HisH subunit catalyzes the hydrolysis of glutamine to glutamate and ammonia as part of the synthesis of IGP and AICAR. The resulting ammonia molecule is channeled to the active site of HisF. The chain is Imidazole glycerol phosphate synthase subunit HisH from Corynebacterium efficiens (strain DSM 44549 / YS-314 / AJ 12310 / JCM 11189 / NBRC 100395).